A 754-amino-acid chain; its full sequence is Glutathione biosynthesis bifunctional protein GshAB (754 aa).

Positions 1–333 (MHINQLLQHA…KAQKLNDKIA (333 aa)) are glutamate--cysteine ligase. An ATP-grasp domain is found at 489 to 752 (KKILRENGYP…LAKLFPEIST (264 aa)). Residue 516–574 (SQIKNKPIVVKPKTTNFGLGISIFETAASHNDYEKALDIAFIEDYSVLVEEFIPGTEYR) participates in ATP binding. Asp696, Glu717, and Asn719 together coordinate Mg(2+). Mn(2+) contacts are provided by Asp696, Glu717, and Asn719.

In the N-terminal section; belongs to the glutamate--cysteine ligase type 1 family. Type 2 subfamily. In terms of assembly, monomer. Mg(2+) serves as cofactor. The cofactor is Mn(2+).

The catalysed reaction is L-cysteine + L-glutamate + ATP = gamma-L-glutamyl-L-cysteine + ADP + phosphate + H(+). It catalyses the reaction gamma-L-glutamyl-L-cysteine + glycine + ATP = glutathione + ADP + phosphate + H(+). Its pathway is sulfur metabolism; glutathione biosynthesis; glutathione from L-cysteine and L-glutamate: step 1/2. It functions in the pathway sulfur metabolism; glutathione biosynthesis; glutathione from L-cysteine and L-glutamate: step 2/2. Synthesizes glutathione from L-glutamate and L-cysteine via gamma-L-glutamyl-L-cysteine. The chain is Glutathione biosynthesis bifunctional protein GshAB from Streptococcus mutans serotype c (strain ATCC 700610 / UA159).